The primary structure comprises 200 residues: Imidazoleglycerol-phosphate dehydratase (200 aa).

The protein belongs to the imidazoleglycerol-phosphate dehydratase family.

The protein resides in the cytoplasm. The enzyme catalyses D-erythro-1-(imidazol-4-yl)glycerol 3-phosphate = 3-(imidazol-4-yl)-2-oxopropyl phosphate + H2O. Its pathway is amino-acid biosynthesis; L-histidine biosynthesis; L-histidine from 5-phospho-alpha-D-ribose 1-diphosphate: step 6/9. This Chlorobium phaeovibrioides (strain DSM 265 / 1930) (Prosthecochloris vibrioformis (strain DSM 265)) protein is Imidazoleglycerol-phosphate dehydratase.